Here is a 142-residue protein sequence, read N- to C-terminus: Large ribosomal subunit protein uL11 (142 aa).

This sequence belongs to the universal ribosomal protein uL11 family. In terms of assembly, part of the ribosomal stalk of the 50S ribosomal subunit. Interacts with L10 and the large rRNA to form the base of the stalk. L10 forms an elongated spine to which L12 dimers bind in a sequential fashion forming a multimeric L10(L12)X complex. Post-translationally, one or more lysine residues are methylated.

Functionally, forms part of the ribosomal stalk which helps the ribosome interact with GTP-bound translation factors. The polypeptide is Large ribosomal subunit protein uL11 (Brucella anthropi (strain ATCC 49188 / DSM 6882 / CCUG 24695 / JCM 21032 / LMG 3331 / NBRC 15819 / NCTC 12168 / Alc 37) (Ochrobactrum anthropi)).